Reading from the N-terminus, the 358-residue chain is Carbohydrate sulfotransferase 10 (358 aa).

Residues 1–6 lie on the Cytoplasmic side of the membrane; it reads MHHQWL. The helical; Signal-anchor for type II membrane protein transmembrane segment at 7-27 threads the bilayer; sequence LLAACFWVIFMFMVASKFITL. Residues 28–358 lie on the Lumenal side of the membrane; the sequence is TFKDPDGYGA…GYRVPDFLLN (331 aa). Asn101 carries N-linked (GlcNAc...) asparagine glycosylation. Residues 129–135 and 191–199 contribute to the 3'-phosphoadenylyl sulfate site; these read PKVGNTQ and RDPFERLIS. An N-linked (GlcNAc...) asparagine glycan is attached at Asn318.

It belongs to the sulfotransferase 2 family. In terms of tissue distribution, predominantly expressed in hypertrophic, prehypertrophic and proliferative chondrocytes at E12 but is down-regulated in epiphyseal chondrocytes.

Its subcellular location is the golgi apparatus membrane. In terms of biological role, catalyzes the transfer of sulfate to position 3 of terminal glucuronic acid of both protein- and lipid-linked oligosaccharides. Participates in biosynthesis of HNK-1 carbohydrate structure, a sulfated glucuronyl-lactosaminyl residue carried by many neural recognition molecules, which is involved in cell interactions during ontogenetic development and in synaptic plasticity in the adult. This Gallus gallus (Chicken) protein is Carbohydrate sulfotransferase 10 (CHST10).